The sequence spans 693 residues: Tegument protein UL47 (693 aa).

2 disordered regions span residues 1-32 (MSAREPAGRRRRASTRPRASPVADEPAGDGVG) and 48-126 (ELEA…GYLG). A compositionally biased stretch (acidic residues) spans 48-57 (ELEALEEMAG). The RNA-binding stretch occupies residues 50–75 (EALEEMAGDEPPVRRRREGPRARRRR). The Nuclear localization signal signature appears at 63-75 (RRRREGPRARRRR). Over residues 63–75 (RRRREGPRARRRR) the composition is skewed to basic residues. Positions 647–670 (SVLGPGVRVVDIMSQFRKLLMGDE) match the Nuclear export signal motif.

Belongs to the alphaherpesvirinae HHV-1 UL47 family. In terms of assembly, interacts with US3 kinase. Interacts with UL31 and UL34; these interactions seem important for efficient virion nuclear egress. Interacts with UL41/VHS. In terms of processing, phosphorylated by US3. This phosphorylation is required for proper nuclear localization.

Its subcellular location is the virion tegument. The protein resides in the host nucleus. The protein localises to the host cytoplasm. Functionally, tegument protein that can bind to various RNA transcripts. Plays a role in the attenuation of selective viral and cellular mRNA degradation by modulating the activity of host shutoff RNase UL41/VHS. Also plays a role in the primary envelopment of virions in the perinuclear space, probably by interacting with two nuclear egress proteins UL31 and UL34. The sequence is that of Tegument protein UL47 from Human herpesvirus 1 (strain F) (HHV-1).